Here is a 273-residue protein sequence, read N- to C-terminus: Torsin-1A (273 aa).

An interaction with SNAPIN region spans residues 45-205; sequence KPKKPLTLSL…VSVFNNKNSG (161 aa). Residue 56–63 participates in ATP binding; that stretch reads GWTGTGKN. 2 N-linked (GlcNAc...) asparagine glycosylation sites follow: Asn-97 and Asn-112.

The protein belongs to the ClpA/ClpB family. Torsin subfamily. Homohexamer. Interacts with TOR1B; the interaction may be specific of neural tissues. Interacts (ATP-bound) with TOR1AIP1 and TOR1AIP2; the interactions induce ATPase activity. Interacts with KLHL14; preferentially when ATP-free. Interacts with KLC1 (via TPR repeats); the interaction associates TOR1A with the kinesin oligomeric complex. Interacts with COPS4; the interaction associates TOR1A with the CSN complex. Interacts with SNAPIN; the interaction is direct and associates SNAPIN with the CSN complex. Interacts with STON2. Interacts (ATP-bound) with SYNE3 (via KASH domain); the interaction is required for SYNE3 nuclear envelope localization. Interacts with VIM; the interaction associates TOR1A with the cytoskeleton. Interacts with PLEC. Interacts (ATP-bound) with SLC6A3; regulates SLC6A3 transport to the plasma membrane. Post-translationally, N-glycosylated.

It localises to the endoplasmic reticulum lumen. The protein localises to the nucleus membrane. It is found in the cell projection. Its subcellular location is the growth cone. The protein resides in the cytoplasmic vesicle membrane. It localises to the synapse. The protein localises to the synaptosome. It is found in the cytoplasm. Its subcellular location is the cytoskeleton. The enzyme catalyses ATP + H2O = ADP + phosphate + H(+). Protein with chaperone functions important for the control of protein folding, processing, stability and localization as well as for the reduction of misfolded protein aggregates. Involved in the regulation of synaptic vesicle recycling, controls STON2 protein stability in collaboration with the COP9 signalosome complex (CSN). In the nucleus, may link the cytoskeleton with the nuclear envelope, this mechanism seems to be crucial for the control of nuclear polarity, cell movement and, specifically in neurons, nuclear envelope integrity. Participates in the cellular trafficking and may regulate the subcellular location of multipass membrane proteins such as the dopamine transporter SLC6A3, leading to the modulation of dopamine neurotransmission. In the endoplasmic reticulum, plays a role in the quality control of protein folding by increasing clearance of misfolded proteins such as SGCE variants or holding them in an intermediate state for proper refolding. May have a redundant function with TOR1B in non-neural tissues. This chain is Torsin-1A (TOR1A), found in Cricetus cricetus (Black-bellied hamster).